The sequence spans 404 residues: NADH-quinone oxidoreductase subunit D 2 (404 aa).

It belongs to the complex I 49 kDa subunit family. As to quaternary structure, NDH-1 is composed of 14 different subunits. Subunits NuoB, C, D, E, F, and G constitute the peripheral sector of the complex.

The protein resides in the cell inner membrane. The enzyme catalyses a quinone + NADH + 5 H(+)(in) = a quinol + NAD(+) + 4 H(+)(out). Its function is as follows. NDH-1 shuttles electrons from NADH, via FMN and iron-sulfur (Fe-S) centers, to quinones in the respiratory chain. The immediate electron acceptor for the enzyme in this species is believed to be ubiquinone. Couples the redox reaction to proton translocation (for every two electrons transferred, four hydrogen ions are translocated across the cytoplasmic membrane), and thus conserves the redox energy in a proton gradient. The protein is NADH-quinone oxidoreductase subunit D 2 of Rhizobium etli (strain CIAT 652).